The primary structure comprises 377 residues: N5-carboxyaminoimidazole ribonucleotide synthase (377 aa).

ATP is bound by residues Arg-93, Lys-133, 138–144, 175–178, Glu-183, His-206, and 257–258; these read GYDGKGQ, EEFV, and NE. One can recognise an ATP-grasp domain in the interval 97-287; it reads KALLDRAQVA…QFENHLRAVC (191 aa).

The protein belongs to the PurK/PurT family. Homodimer.

It catalyses the reaction 5-amino-1-(5-phospho-beta-D-ribosyl)imidazole + hydrogencarbonate + ATP = 5-carboxyamino-1-(5-phospho-D-ribosyl)imidazole + ADP + phosphate + 2 H(+). Its pathway is purine metabolism; IMP biosynthesis via de novo pathway; 5-amino-1-(5-phospho-D-ribosyl)imidazole-4-carboxylate from 5-amino-1-(5-phospho-D-ribosyl)imidazole (N5-CAIR route): step 1/2. Functionally, catalyzes the ATP-dependent conversion of 5-aminoimidazole ribonucleotide (AIR) and HCO(3)(-) to N5-carboxyaminoimidazole ribonucleotide (N5-CAIR). This chain is N5-carboxyaminoimidazole ribonucleotide synthase, found in Vibrio cholerae serotype O1 (strain ATCC 39315 / El Tor Inaba N16961).